The chain runs to 207 residues: MTDRLLVLVRHGQSEWNLKNLFTGWKDPGLTEKGVAEAIEAGKKLKAQGLVFDVAFTSVLTRAQTTLDLMLNELGQTGLPTSKNLALNERDYGDLSGLNKDDARKKWGEEQVHVWRRSYDVPPPGGESLKDTLARALPYYVQEILPCVLRGERTLVAAHGNSLRALIMVLEKLTPESILKRELGTGAPVIYRLNADSTVASKLDLAE.

Substrate is bound by residues 10–17, 23–24, Arg62, 89–92, Lys100, 116–117, and 160–161; these read RHGQSEWN, TG, ERDY, RR, and GN. His11 functions as the Tele-phosphohistidine intermediate in the catalytic mechanism. Catalysis depends on Glu89, which acts as the Proton donor/acceptor.

The protein belongs to the phosphoglycerate mutase family. BPG-dependent PGAM subfamily. Homodimer.

It catalyses the reaction (2R)-2-phosphoglycerate = (2R)-3-phosphoglycerate. It functions in the pathway carbohydrate degradation; glycolysis; pyruvate from D-glyceraldehyde 3-phosphate: step 3/5. Its function is as follows. Catalyzes the interconversion of 2-phosphoglycerate and 3-phosphoglycerate. The protein is 2,3-bisphosphoglycerate-dependent phosphoglycerate mutase of Rhodopseudomonas palustris (strain BisB18).